The primary structure comprises 432 residues: Type I restriction enzyme MjaIX specificity subunit (432 aa).

The protein belongs to the type-I restriction system S methylase family. As to quaternary structure, the type I restriction/modification system is composed of three polypeptides R, M and S.

In terms of biological role, the specificity (S) subunit of a type I restriction enzyme; this subunit dictates DNA sequence specificity. The M and S subunits together form a methyltransferase (MTase) that methylates A-3 on the top and A-2 on the bottom strand of the sequence 5'-CCAN(5)GTR-3'. In the presence of the R subunit the complex can also act as an endonuclease, binding to the same target sequence but cutting the DNA some distance from this site. Whether the DNA is cut or modified depends on the methylation state of the target sequence. When the target site is unmodified, the DNA is cut. When the target site is hemimethylated, the complex acts as a maintenance MTase modifying the DNA so that both strands become methylated. After locating a non-methylated recognition site, the enzyme complex serves as a molecular motor that translocates DNA in an ATP-dependent manner until a collision occurs that triggers cleavage. The sequence is that of Type I restriction enzyme MjaIX specificity subunit (hsdS) from Methanocaldococcus jannaschii (strain ATCC 43067 / DSM 2661 / JAL-1 / JCM 10045 / NBRC 100440) (Methanococcus jannaschii).